The chain runs to 202 residues: Nudix hydrolase 13, mitochondrial (202 aa).

The Nudix hydrolase domain occupies 18 to 167 (NFRLVSGCIP…WMQSALEEFL (150 aa)). The Nudix box motif lies at 65 to 86 (GGWEDDETVLEAASREAMEEAG). Residues Glu-80 and Glu-84 each contribute to the Mg(2+) site.

It belongs to the Nudix hydrolase family. In terms of assembly, monomer. Requires Mg(2+) as cofactor. In terms of tissue distribution, expressed in roots, leaves, stems and inflorescences.

Its subcellular location is the mitochondrion. Inhibited by fluoride. In terms of biological role, mediates the hydrolysis of some nucleoside diphosphate derivatives. Can use diadenosine 5',5'''-P(1)P(6) hexaphosphate (Ap(6)A), diadenosine 5',5'''-P(1)P(5) pentaphosphate (Ap(5)A) and adenosine tetraphosphate (p(4)A) as substrates, but not diadenosine 5',5'''-P(1)P(4) tetraphosphate (Ap(4)A), diadenosine 5',5'''-P(1)P(3) triphosphate (Ap(3)A), deoxyribonucleoside triphosphates, ribonucleoside triphosphates, diphosphoinositol pentakisphosphate (PP-InsP(5)) and 5-phospho-alpha-D-ribosyl diphosphate (PRPP). The protein is Nudix hydrolase 13, mitochondrial (NUDT13) of Arabidopsis thaliana (Mouse-ear cress).